The primary structure comprises 236 residues: tRNA (guanine-N(7)-)-methyltransferase (236 aa).

S-adenosyl-L-methionine contacts are provided by Asp35, Glu60, Asn87, and Asp113. The active site involves Asp113. Residues Lys117 and Asp149 each coordinate substrate.

This sequence belongs to the class I-like SAM-binding methyltransferase superfamily. TrmB family.

It carries out the reaction guanosine(46) in tRNA + S-adenosyl-L-methionine = N(7)-methylguanosine(46) in tRNA + S-adenosyl-L-homocysteine. Its pathway is tRNA modification; N(7)-methylguanine-tRNA biosynthesis. In terms of biological role, catalyzes the formation of N(7)-methylguanine at position 46 (m7G46) in tRNA. The sequence is that of tRNA (guanine-N(7)-)-methyltransferase from Parasynechococcus marenigrum (strain WH8102).